The primary structure comprises 298 residues: Probable 2-(5''-triphosphoribosyl)-3'-dephosphocoenzyme-A synthase 2 (298 aa).

It belongs to the CitG/MdcB family.

It carries out the reaction 3'-dephospho-CoA + ATP = 2'-(5''-triphospho-alpha-D-ribosyl)-3'-dephospho-CoA + adenine. The protein is Probable 2-(5''-triphosphoribosyl)-3'-dephosphocoenzyme-A synthase 2 of Salmonella paratyphi A (strain ATCC 9150 / SARB42).